The sequence spans 558 residues: PE cleavage protein A (558 aa).

The PE domain occupies M1–T93. D297 is an active-site residue.

The protein belongs to the mycobacterial PE family. PGRS subfamily. Undergoes auto-proteolytic processing.

It is found in the secreted. The protein localises to the cell surface. Functionally, aspartic protease that processes the lipase LipY and other PE_PGRS proteins. Can also cleave itself. This chain is PE cleavage protein A, found in Mycobacterium tuberculosis (strain CDC 1551 / Oshkosh).